A 131-amino-acid polypeptide reads, in one-letter code: Profilin LP04 (131 aa).

The protein belongs to the profilin family. In terms of assembly, occurs in many kinds of cells as a complex with monomeric actin in a 1:1 ratio.

It localises to the cytoplasm. The protein localises to the cytoskeleton. Binds to actin and affects the structure of the cytoskeleton. At high concentrations, profilin prevents the polymerization of actin, whereas it enhances it at low concentrations. By binding to PIP2, it inhibits the formation of IP3 and DG. The sequence is that of Profilin LP04 from Oryza sativa subsp. indica (Rice).